A 268-amino-acid polypeptide reads, in one-letter code: Virulence plasmid ParA family protein pGP5-D (268 aa).

Residue 13–20 (FKGGTGKT) participates in ATP binding.

This sequence belongs to the ParA family.

The polypeptide is Virulence plasmid ParA family protein pGP5-D (Chlamydia muridarum (strain MoPn / Nigg)).